We begin with the raw amino-acid sequence, 225 residues long: Uridylate kinase (225 aa).

9-10 (GS) is a binding site for ATP. Residue G44 coordinates UMP. 2 residues coordinate ATP: G45 and R49. UMP is bound by residues D66 and 114–120 (THPGHTT). ATP contacts are provided by T140, N141, Y146, and D149.

This sequence belongs to the UMP kinase family. Homohexamer.

The protein resides in the cytoplasm. The catalysed reaction is UMP + ATP = UDP + ADP. It functions in the pathway pyrimidine metabolism; CTP biosynthesis via de novo pathway; UDP from UMP (UMPK route): step 1/1. Inhibited by UTP. In terms of biological role, catalyzes the reversible phosphorylation of UMP to UDP. The polypeptide is Uridylate kinase (Thermococcus kodakarensis (strain ATCC BAA-918 / JCM 12380 / KOD1) (Pyrococcus kodakaraensis (strain KOD1))).